The following is a 152-amino-acid chain: Putative polyketide cyclase (152 aa).

The protein to polyketide cyclases.

It participates in antibiotic biosynthesis; curamycin biosynthesis. The chain is Putative polyketide cyclase (curF) from Streptomyces cyaneus (Streptomyces curacoi).